The following is a 297-amino-acid chain: 4-hydroxy-tetrahydrodipicolinate synthase (297 aa).

A pyruvate-binding site is contributed by Thr-55. Tyr-144 functions as the Proton donor/acceptor in the catalytic mechanism. The active-site Schiff-base intermediate with substrate is the Lys-172. A pyruvate-binding site is contributed by Ile-213.

The protein belongs to the DapA family. In terms of assembly, homotetramer; dimer of dimers.

The protein localises to the cytoplasm. The enzyme catalyses L-aspartate 4-semialdehyde + pyruvate = (2S,4S)-4-hydroxy-2,3,4,5-tetrahydrodipicolinate + H2O + H(+). The protein operates within amino-acid biosynthesis; L-lysine biosynthesis via DAP pathway; (S)-tetrahydrodipicolinate from L-aspartate: step 3/4. In terms of biological role, catalyzes the condensation of (S)-aspartate-beta-semialdehyde [(S)-ASA] and pyruvate to 4-hydroxy-tetrahydrodipicolinate (HTPA). The sequence is that of 4-hydroxy-tetrahydrodipicolinate synthase from Lactococcus lactis subsp. cremoris (strain SK11).